The chain runs to 589 residues: Guanylate-binding protein 2 (589 aa).

Residues 1–309 (MASEIHMSEP…GAISNGSLPC (309 aa)) are GTPase domain (Globular). The GB1/RHD3-type G domain maps to 35 to 276 (TQPVVVVAIV…FTSYILSYSS (242 aa)). Residues 45-52 (GLYRTGKS), 181-182 (RD), and Leu245 each bind GTP. At Cys586 the chain carries Cysteine methyl ester. Cys586 is lipidated: S-geranylgeranyl cysteine. The propeptide at 587–589 (TIL) is removed in mature form.

Belongs to the TRAFAC class dynamin-like GTPase superfamily. GB1/RHD3 GTPase family. GB1 subfamily. Homodimer; homodimerization occurs upon GTP-binding and is required for the association with membranous structures. Heterodimer with other family members, including GBP1, GBP3, GBP4 and GBP5. Post-translationally, isoprenylation is required for proper subcellular location.

It is found in the cytoplasmic vesicle membrane. The protein resides in the golgi apparatus membrane. It localises to the cytoplasm. Its subcellular location is the perinuclear region. It carries out the reaction GTP + H2O = GDP + phosphate + H(+). Functionally, interferon (IFN)-inducible GTPase that plays important roles in innate immunity against a diverse range of bacterial, viral and protozoan pathogens. Hydrolyzes GTP to GMP in 2 consecutive cleavage reactions, but the major reaction product is GDP. Following infection, recruited to the pathogen-containing vacuoles or vacuole-escaped bacteria and acts as a positive regulator of inflammasome assembly by promoting the release of inflammasome ligands from bacteria. Acts by promoting lysis of pathogen-containing vacuoles, releasing pathogens into the cytosol. Following pathogen release in the cytosol, promotes recruitment of proteins that mediate bacterial cytolysis, such as Gm12250/Irgb10: this liberates ligands that are detected by inflammasomes, such as lipopolysaccharide (LPS) that activates the non-canonical CASP4/CASP11 inflammasome or double-stranded DNA (dsDNA) that activates the AIM2 inflammasome. Confers protection to the protozoan pathogen Toxoplasma gondii. Independently of its GTPase activity, acts as an inhibitor of various viruses infectivity by inhibiting FURIN-mediated maturation of viral envelope proteins. This is Guanylate-binding protein 2 from Mus musculus (Mouse).